An 88-amino-acid polypeptide reads, in one-letter code: Small ribosomal subunit protein uS15c (88 aa).

Belongs to the universal ribosomal protein uS15 family. As to quaternary structure, part of the 30S ribosomal subunit.

The protein localises to the plastid. Its subcellular location is the chloroplast. The polypeptide is Small ribosomal subunit protein uS15c (rps15) (Pinus koraiensis (Korean pine)).